Reading from the N-terminus, the 788-residue chain is Endonuclease MutS2 (788 aa).

335-342 (GPNTGGKT) is a binding site for ATP. The segment at 688 to 708 (VKSASKTKKRSGGTSITKQSA) is disordered. The span at 699 to 708 (GGTSITKQSA) shows a compositional bias: polar residues. A Smr domain is found at 713-788 (LDLRGVRVEE…GHGVTIIELK (76 aa)).

Belongs to the DNA mismatch repair MutS family. MutS2 subfamily. As to quaternary structure, homodimer. Binds to stalled ribosomes, contacting rRNA.

Its function is as follows. Endonuclease that is involved in the suppression of homologous recombination and thus may have a key role in the control of bacterial genetic diversity. Acts as a ribosome collision sensor, splitting the ribosome into its 2 subunits. Detects stalled/collided 70S ribosomes which it binds and splits by an ATP-hydrolysis driven conformational change. Acts upstream of the ribosome quality control system (RQC), a ribosome-associated complex that mediates the extraction of incompletely synthesized nascent chains from stalled ribosomes and their subsequent degradation. Probably generates substrates for RQC. This is Endonuclease MutS2 from Exiguobacterium sibiricum (strain DSM 17290 / CCUG 55495 / CIP 109462 / JCM 13490 / 255-15).